The following is a 110-amino-acid chain: Late cornified envelope protein 1A (110 aa).

Residues 1-10 (MSCQQSQQQC) are compositionally biased toward low complexity. Disordered regions lie at residues 1–23 (MSCQ…CPPK) and 83–110 (QSSG…GGCC). The span at 11-23 (QPPPKCTPKCPPK) shows a compositional bias: pro residues. The span at 83–95 (QSSGCCSQPSGGS) shows a compositional bias: low complexity. Residues 96–110 (SCCGGDSGQHSGGCC) show a composition bias toward gly residues.

This sequence belongs to the LCE family. In terms of assembly, interacts with CYSRT1. Skin-specific. Expression was readily detected in adult trunk skin, adult arm skin, fetal skin, penal skin, vulva, esophagus and tongue. Not expressed in the cervix, rectum, lung, colon, or placenta.

Its function is as follows. Precursors of the cornified envelope of the stratum corneum. The chain is Late cornified envelope protein 1A (LCE1A) from Homo sapiens (Human).